A 168-amino-acid chain; its full sequence is MACKSSCSLLLLAAVLLSVLAAASASGSCVPGVAFRTNLLPHCRDYVLQQTCGTFTPGSKLPEWMTSASIYSPGKPYLAKLYCCQELAEISQQCRCEALRYFIALPVPSQPVDPRSGNVGESGLIDLPGCPREMQWDFVRLLVAPGQCNLATIHNVRYCPAVEQPLWI.

The first 25 residues, 1–25 (MACKSSCSLLLLAAVLLSVLAAASA), serve as a signal peptide directing secretion.

Belongs to the protease inhibitor I6 (cereal trypsin/alpha-amylase inhibitor) family. Subunit of the tetrameric inhibitor. In terms of processing, five disulfide bonds, which are essential for the inhibitor activity, are probably present. Developing endosperm.

Its subcellular location is the secreted. Alpha-amylase/trypsin inhibitor. It could be involved in insect defense mechanisms. This Triticum aestivum (Wheat) protein is Alpha-amylase/trypsin inhibitor CM3.